A 322-amino-acid chain; its full sequence is Transcription cofactor vestigial-like protein 2 (322 aa).

Residues 42–61 show a composition bias toward low complexity; the sequence is ASPGSSASGSSSFSNPTPAS. Disordered stretches follow at residues 42-75 and 248-322; these read ASPG…ERPP and PGRL…PTLG. Residues 62–75 are compositionally biased toward basic and acidic residues; it reads VKEEEGSPEKERPP. Low complexity-rich tracts occupy residues 248–258 and 270–283; these read PGRLAPASAPA and GEPA…PGGP. Residues 312–322 are compositionally biased toward pro residues; that stretch reads SAPPALYPTLG.

It belongs to the vestigial family. As to quaternary structure, interacts with TEFs. Binds to TEAD1/TEF1. Skeletal muscle specific.

The protein localises to the nucleus. In terms of biological role, may act as a specific coactivator for the mammalian TEFs. May play a role in the development of skeletal muscles. The polypeptide is Transcription cofactor vestigial-like protein 2 (Vgll2) (Mus musculus (Mouse)).